The following is a 512-amino-acid chain: Monocarboxylate transporter 10 (512 aa).

The tract at residues 1-44 (MVPSQEEPAAERETNEAQPPGPAPSDDAPLPGPGPSDVSDVAAE) is disordered. The Cytoplasmic portion of the chain corresponds to 1-63 (MVPSQEEPAA…AGSEPPVPPE (63 aa)). Residues 64–84 (GGWGWLVMLAAMWCNGSVFGI) form a helical membrane-spanning segment. At 85–111 (QNAYGVLFVSMLDTFKAKDDDNMAFKT) the chain is on the extracellular side. The helical transmembrane segment at 112 to 132 (AWVGSLSMGMIFFCCPIVSVF) threads the bilayer. At 133-141 (TDMFGCRRT) the chain is on the cytoplasmic side. The helical transmembrane segment at 142 to 162 (AVVGAAVGFIGLMSSSFVSSI) threads the bilayer. Topologically, residues 163–168 (EPLYLT) are extracellular. Residues 169–189 (YGIIFACGCSFAYQPSLVILG) form a helical membrane-spanning segment. Topologically, residues 190-201 (HYFKKRLGLVNG) are cytoplasmic. The helical transmembrane segment at 202–222 (IVTAGSSVFTILLPLLLGNLI) threads the bilayer. Residues 223 to 232 (SSVKLFNTLR) lie on the Extracellular side of the membrane. A helical membrane pass occupies residues 233 to 253 (ILCIFMFVLFLAGFTYRPLVP). Topologically, residues 254–291 (STKEKESGGSRSSFFSRRKLSPPKKVFNFALFKETTYA) are cytoplasmic. The residue at position 260 (serine 260) is a Phosphoserine. The chain crosses the membrane as a helical span at residues 292 to 312 (VWAAGIPLALFGYFVPYVHLM). At 313–326 (NHVKERFQDVNNKE) the chain is on the extracellular side. Residues 327-347 (VLFMCIGITSGVGRLLFGRIA) form a helical membrane-spanning segment. Residues 348–362 (DYLPGVKKVYLQVLS) lie on the Cytoplasmic side of the membrane. The helical transmembrane segment at 363–383 (FFFIGLMSMMIPLCSAFGALI) threads the bilayer. A topological domain (extracellular) is located at residue alanine 384. Residues 385-405 (VCLAMGLFDGCFISIMAPIAF) traverse the membrane as a helical segment. The Cytoplasmic portion of the chain corresponds to 406 to 416 (ELVGPQDASQA). Residues 417–437 (IGFLLGFMSIPMTVGPPIAGL) form a helical membrane-spanning segment. Over 438–448 (LHDKLGTYDVA) the chain is Extracellular. A helical transmembrane segment spans residues 449–469 (FYLAGIPPFVGGVVLCLIPWI). Over 470 to 512 (HSKKQRKISKNAGGEKMEKMLENQSSLLSGSSGIFKKDSASII) the chain is Cytoplasmic. Phosphoserine is present on residues serine 495, serine 498, serine 500, and serine 501.

Belongs to the major facilitator superfamily. Monocarboxylate porter (TC 2.A.1.13) family. Not N-glycosylated. In terms of tissue distribution, highly expressed in small intestine, particularly in jejunum and ileum, scarcely in colon and substantially in kidney, liver and skeletal muscle. In the brain expression is low and appears to be restricted to a subset of neurons, microglia cells, and oligodendrocytes.

It is found in the cell membrane. Its subcellular location is the basolateral cell membrane. It carries out the reaction L-tryptophan(in) = L-tryptophan(out). The enzyme catalyses L-tyrosine(in) = L-tyrosine(out). It catalyses the reaction L-phenylalanine(in) = L-phenylalanine(out). The catalysed reaction is 3,3',5-triiodo-L-thyronine(out) = 3,3',5-triiodo-L-thyronine(in). It carries out the reaction L-thyroxine(out) = L-thyroxine(in). In terms of biological role, sodium- and proton-independent thyroid hormones and aromatic acids transporter. Mediates both uptake and efflux of 3,5,3'-triiodothyronine (T3) and 3,5,3',5'-tetraiodothyronine (T4) with high affinity, suggesting a role in the homeostasis of thyroid hormone levels. Responsible for low affinity bidirectional transport of the aromatic amino acids, such as phenylalanine, tyrosine, tryptophan and L-3,4-dihydroxyphenylalanine (L-dopa). Plays an important role in homeostasis of aromatic amino acids. This chain is Monocarboxylate transporter 10 (Slc16a10), found in Mus musculus (Mouse).